An 828-amino-acid polypeptide reads, in one-letter code: MQDRNLIDVNLTSEMKTSFIDYAMSVIVARALPDVRDGLKPVHRRILYGMNELGVTPDKPHKKSARITGDVMGKYHPHGDSSIYEAMVRMAQWWSYRHMLVDGHGNFGSMDGDGAAAQRYTEARMSKIALELLRDINKNTVNFQDNYDGSEREPVVLPARFPNLLVNGATGIAVGMATNIPPHNLAESIDAVKMVMEHPDCTTRELMEVIPGPDFPTGALVMGRSGIHRAYDTGKGSIVLRSRTEIETTQTGRERIVVTEFPYGVNKTKVHEHIVRLAQEKRLEGITAVRDESSREGVRFVIEIRREASATVILNNLFKLTSLQTNFSFNMLAIENGVPKILSLRQIIDNYISYQKEVIIRRTRFDKDKAEARAHILEGLLIALDHLDEVIAIIRNSETDVIAQTELMSRFDLSERQSQAILDMRLRRLTGLERDKIQSEYDDLLALIADLSDILAKPERIITIIKEEMDEIKRKYANPRRTELMVGEVLSLEDEDLIEEEDVLITLSNKGYIKRLAQDEFRAQKRGGRGVQGTGVNNDDFVRELVSTSTHDTLLFFTNFGRVYRLKAYEIPEYGRTAKGLPIVNLLKLEDGETIQTIINARKEETAGKSFFFTTKQGIVKRTEVSEFNNIRQNGLRALKLKEGDQLINVLLTSGQDDIIIGTHSGYSVRFNEASIRNMGRSATGVRGVKLREDDRVVGASRIRDNQEVLVITENGFGKRTSATDYPTKGRGGKGIKTANITPKNGQLAGLVTVDGTEDIMVITNKGVIIRTNVANISQTGRATLGVKIMKLDADAKIVTFTLVQPEDSSIAEINTDRENSISKNKDN.

Positions 32–497 (LPDVRDGLKP…EVLSLEDEDL (466 aa)) constitute a Topo IIA-type catalytic domain. Tyr120 serves as the catalytic O-(5'-phospho-DNA)-tyrosine intermediate. Positions 524–530 (QKRGGRG) match the GyrA-box motif.

It belongs to the type II topoisomerase GyrA/ParC subunit family. Heterotetramer, composed of two GyrA and two GyrB chains. In the heterotetramer, GyrA contains the active site tyrosine that forms a transient covalent intermediate with DNA, while GyrB binds cofactors and catalyzes ATP hydrolysis.

It localises to the cytoplasm. It carries out the reaction ATP-dependent breakage, passage and rejoining of double-stranded DNA.. Its function is as follows. A type II topoisomerase that negatively supercoils closed circular double-stranded (ds) DNA in an ATP-dependent manner to modulate DNA topology and maintain chromosomes in an underwound state. Negative supercoiling favors strand separation, and DNA replication, transcription, recombination and repair, all of which involve strand separation. Also able to catalyze the interconversion of other topological isomers of dsDNA rings, including catenanes and knotted rings. Type II topoisomerases break and join 2 DNA strands simultaneously in an ATP-dependent manner. The sequence is that of DNA gyrase subunit A from Streptococcus pyogenes serotype M18 (strain MGAS8232).